Consider the following 99-residue polypeptide: Small ribosomal subunit protein uS19 (99 aa).

A disordered region spans residues 76–99 (PTRSFRGHAGGGKAEKGGSAPRKK).

Belongs to the universal ribosomal protein uS19 family.

In terms of biological role, protein S19 forms a complex with S13 that binds strongly to the 16S ribosomal RNA. In Pelodictyon phaeoclathratiforme (strain DSM 5477 / BU-1), this protein is Small ribosomal subunit protein uS19.